Reading from the N-terminus, the 169-residue chain is Thaumatin-like pathogenesis-related protein 3 (169 aa).

The first 21 residues, 1 to 21 (MATSSAVLFLLLAVFAAGASA), serve as a signal peptide directing secretion.

The protein belongs to the thaumatin family.

In terms of biological role, associated with resistance against stem rust fungi. The chain is Thaumatin-like pathogenesis-related protein 3 (RASTL-3) from Avena sativa (Oat).